A 356-amino-acid polypeptide reads, in one-letter code: MSSTRPFCFVCGKEKSVGVFQLIEGCIVPGTFKPIKDILKYFEKIINQRLELLPNSAACRDCLEYLFNYDRLVRNLSQVQRQIADALLGCRQVEGKAETKQQAAKRARVQVPAFKIVQATALKEPERQPGEEDECEEFMKEEMLDEEFQFSEPDDSMPSSEEEFFTETTEIPCHICGEMFSSQEVLERHIKADTCQKSEQATCNVCGLKVKDDEVLDLHMNLHEGKTELECRYCDKKFSHKRNVLRHMEVHWDKKKYQCDKCGERFSLSWLMYNHLMRHDAEENALICEVCHQQFKTKRTYKHHLRTHQTDRPRYPCPDCEKSFVDKYTLKVHKRVHQPVEKPESAEAKEATVTFF.

The segment at 171-193 (IPCHICGEMFSSQEVLERHIKAD) adopts a C2H2-type 1; degenerate zinc-finger fold. 5 consecutive C2H2-type zinc fingers follow at residues 201–223 (ATCNVCGLKVKDDEVLDLHMNLH), 229–251 (LECRYCDKKFSHKRNVLRHMEVH), 257–279 (YQCDKCGERFSLSWLMYNHLMRH), 286–308 (LICEVCHQQFKTKRTYKHHLRTH), and 315–337 (YPCPDCEKSFVDKYTLKVHKRVH).

Binds chromatin; requires N-terminal regions to form protein-protein contacts, in addition to DNA specific recognition by the zinc fingers.

It is found in the nucleus. In terms of biological role, binds to the consensus DNA sequence 5'-YCAGAGATGCGCA-3'. The polypeptide is Serendipity locus protein beta (Sry-beta) (Drosophila melanogaster (Fruit fly)).